The sequence spans 184 residues: Probable RNA 2'-phosphotransferase (184 aa).

It belongs to the KptA/TPT1 family.

In terms of biological role, removes the 2'-phosphate from RNA via an intermediate in which the phosphate is ADP-ribosylated by NAD followed by a presumed transesterification to release the RNA and generate ADP-ribose 1''-2''-cyclic phosphate (APPR&gt;P). May function as an ADP-ribosylase. The sequence is that of Probable RNA 2'-phosphotransferase from Escherichia coli (strain 55989 / EAEC).